The primary structure comprises 159 residues: Ribosomal RNA large subunit methyltransferase H (159 aa).

S-adenosyl-L-methionine contacts are provided by residues Leu-76, Gly-108, and 127-132 (FSKMTL).

It belongs to the RNA methyltransferase RlmH family. In terms of assembly, homodimer.

The protein resides in the cytoplasm. The catalysed reaction is pseudouridine(1915) in 23S rRNA + S-adenosyl-L-methionine = N(3)-methylpseudouridine(1915) in 23S rRNA + S-adenosyl-L-homocysteine + H(+). Specifically methylates the pseudouridine at position 1915 (m3Psi1915) in 23S rRNA. The protein is Ribosomal RNA large subunit methyltransferase H of Bacillus anthracis (strain CDC 684 / NRRL 3495).